Consider the following 344-residue polypeptide: MPVDVASPAGKTVCVTGAGGYIASWIVKILLERGYTVKGTVRNPDDPKNTHLRELEGGKERLILCKADLQDYEALKAAIDGCDGVFHTASPVTDDPEQMVEPAVNGAKFVINAAAEAKVKRVVITSSIGAVYMDPNRDPEAVVDESCWSDLDFCKNTKNWYCYGKMVAEQAAWETAKEKGVDLVVLNPVLVLGPPLQPTINASLYHVLKYLTGSAKTYANLTQAYVDVRDVALAHVLVYEAPSASGRYLLAESARHRGEVVEILAKLFPEYPLPTKCKDEKNPRAKPYKFTNQKIKDLGLEFTSTKQSLYDTVKSLQEKGHLAPPPPPPSASQESVENGIKIGS.

Position 7 is a phosphoserine (Ser7). Residues 17 to 23 (GAGGYIA), Arg42, Lys48, 68 to 69 (DL), 88 to 90 (TAS), Tyr161, Lys165, 188 to 191 (PVLV), and Ser203 contribute to the NADP(+) site. A disulfide bond links Cys154 and Cys162. Lys165 functions as the Proton donor in the catalytic mechanism. The segment at 317–344 (QEKGHLAPPPPPPSASQESVENGIKIGS) is disordered.

Belongs to the NAD(P)-dependent epimerase/dehydratase family. Dihydroflavonol-4-reductase subfamily. Expressed in leaves, stems and flowers.

The enzyme catalyses (E)-cinnamaldehyde + NADP(+) + CoA = (E)-cinnamoyl-CoA + NADPH + H(+). The protein operates within aromatic compound metabolism; phenylpropanoid biosynthesis. Its function is as follows. Involved in the latter stages of lignin biosynthesis. Catalyzes one of the last steps of monolignol biosynthesis, the conversion of cinnamoyl-CoAs into their corresponding cinnamaldehydes. The protein is Cinnamoyl-CoA reductase 1 of Arabidopsis thaliana (Mouse-ear cress).